The primary structure comprises 444 residues: Structure-specific endonuclease subunit SLX1 (444 aa).

Positions 23-105 constitute a GIY-YIG domain; that stretch reads AFYCCYLLRS…QNTKVSRHAD (83 aa). An SLX1-type zinc finger spans residues 240 to 295; sequence CGVCKQRLILQHDIIAVCSHSSCHCAAHLSCLSSHFLKDKDSDSELIPREGTCPAC. 2 disordered regions span residues 323-355 and 386-444; these read RRRRQAGTPKGQGLKSVRGRGRGHSEDESDALQ and AHRP…EVIE.

It belongs to the SLX1 family. As to quaternary structure, forms a heterodimer with SLX4. The cofactor is a divalent metal cation.

Its subcellular location is the nucleus. Its function is as follows. Catalytic subunit of the SLX1-SLX4 structure-specific endonuclease that resolves DNA secondary structures generated during DNA repair and recombination. Has endonuclease activity towards branched DNA substrates, introducing single-strand cuts in duplex DNA close to junctions with ss-DNA. The chain is Structure-specific endonuclease subunit SLX1 from Paracoccidioides brasiliensis (strain Pb18).